A 164-amino-acid chain; its full sequence is Arginine repressor (164 aa).

Belongs to the ArgR family.

It is found in the cytoplasm. The protein operates within amino-acid biosynthesis; L-arginine biosynthesis [regulation]. In terms of biological role, regulates arginine biosynthesis genes. The sequence is that of Arginine repressor from Mycolicibacterium paratuberculosis (strain ATCC BAA-968 / K-10) (Mycobacterium paratuberculosis).